The chain runs to 466 residues: Glutamate--tRNA ligase (466 aa).

The 'HIGH' region signature appears at 11–21 (PSPTGFIHLGN). The short motif at 243 to 247 (KMSKR) is the 'KMSKS' region element. K246 provides a ligand contact to ATP.

This sequence belongs to the class-I aminoacyl-tRNA synthetase family. Glutamate--tRNA ligase type 1 subfamily. Monomer.

It localises to the cytoplasm. The enzyme catalyses tRNA(Glu) + L-glutamate + ATP = L-glutamyl-tRNA(Glu) + AMP + diphosphate. Its function is as follows. Catalyzes the attachment of glutamate to tRNA(Glu) in a two-step reaction: glutamate is first activated by ATP to form Glu-AMP and then transferred to the acceptor end of tRNA(Glu). The polypeptide is Glutamate--tRNA ligase (Cupriavidus taiwanensis (strain DSM 17343 / BCRC 17206 / CCUG 44338 / CIP 107171 / LMG 19424 / R1) (Ralstonia taiwanensis (strain LMG 19424))).